The primary structure comprises 658 residues: Cysteine-rich receptor-like protein kinase 14 (658 aa).

The signal sequence occupies residues 1–22; the sequence is MELKNLFPIFWFVLVGFAVVSA. Gnk2-homologous domains lie at 23–125 and 131–240; these read QECG…NSSF and AEPH…LFPF. Topologically, residues 23–277 are extracellular; sequence QECGKTGFFV…ATKKGSITIS (255 aa). N-linked (GlcNAc...) asparagine glycosylation is found at asparagine 51, asparagine 60, asparagine 102, asparagine 122, and asparagine 146. The chain crosses the membrane as a helical span at residues 278-298; the sequence is IGIVWAIIIPTVIVVFLVLLA. Residues 299–658 are Cytoplasmic-facing; it reads LGFVVYRRRK…DVTITDFEPR (360 aa). Residues 337-614 form the Protein kinase domain; the sequence is FSESNIIGRG…NMMLINNSYV (278 aa). ATP is bound by residues 343-351 and lysine 364; that span reads IGRGGFGEV. The residue at position 409 (tyrosine 409) is a Phosphotyrosine. The active-site Proton acceptor is the aspartate 461. Serine 465 bears the Phosphoserine mark. Threonine 501 is modified (phosphothreonine). At tyrosine 509 the chain carries Phosphotyrosine.

It belongs to the protein kinase superfamily. Ser/Thr protein kinase family. CRK subfamily.

Its subcellular location is the membrane. It carries out the reaction L-seryl-[protein] + ATP = O-phospho-L-seryl-[protein] + ADP + H(+). It catalyses the reaction L-threonyl-[protein] + ATP = O-phospho-L-threonyl-[protein] + ADP + H(+). The protein is Cysteine-rich receptor-like protein kinase 14 (CRK14) of Arabidopsis thaliana (Mouse-ear cress).